We begin with the raw amino-acid sequence, 335 residues long: UPF0353 protein MMAR_2288 (335 aa).

A run of 2 helical transmembrane segments spans residues 18–38 (WFFL…VLQL) and 67–87 (IPAM…AGPT). One can recognise a VWFA domain in the interval 98–294 (VVMLVIDVSQ…AELNSVYASL (197 aa)). The helical transmembrane segment at 309-329 (MGWLRLGALVLVAAALAALLI) threads the bilayer.

This sequence belongs to the UPF0353 family.

It is found in the cell membrane. In Mycobacterium marinum (strain ATCC BAA-535 / M), this protein is UPF0353 protein MMAR_2288.